The following is a 474-amino-acid chain: MSSAASFRTEKDLLGVLEVPAQAYYGIQTLRAINNFRLSGVPISHYPKLVVGLAMVKQAAADANRELGQLSEAKHAAISEACARLIRGDFHEEFVVDMIQGGAGTSTNMNANEVIANIALEAMGHQKGEYQYLHPNNDVNMAQSTNDAYPTAIRLGLLLGHDALLASLDSLIQAFAAKGEEFSHVLKMGRTQLQDAVPMTLGQEFRAFATTLSEDLARLKTLAPELLTEVNLGGTAIGTGINADPRYQALAVQRLATISGQPLVPAADLIEATSDMGAFVLFSGMLKRTAVKLSKICNDLRLLSSGPRTGINEINLPARQPGSSIMPGKVNPVIPEAVNQVAFQIIGNDLALTMAAEGGQLQLNVMEPLIAFKIFDSIRLLQRAMDMLREHCIVGITANEARCRELVEHSIGLVTALNPYIGYENATRIARVALESGRGVLELVREEGLLDDAMLDDILRPENMIAPRLVPLKA.

T105, S144, T145, N146, and T191 together coordinate L-aspartate. Positions G322 to N331 are SS loop. The Proton acceptor role is filled by S323. Residues S324 and K329 each coordinate L-aspartate.

This sequence belongs to the class-II fumarase/aspartase family. Aspartase subfamily. In terms of assembly, homotetramer.

The catalysed reaction is L-aspartate = fumarate + NH4(+). In terms of biological role, lyase involved in the degradation of canavanine, the delta-oxa-analog of arginine, allowing growth on canavanine as sole nitrogen and carbon source. Probably catalyzes the conversion of L-aspartate to fumarate and ammonia. This chain is Aspartate ammonia-lyase, found in Pseudomonas canavaninivorans.